The primary structure comprises 365 residues: tRNA/tmRNA (uracil-C(5))-methyltransferase (365 aa).

Residues Gln-189, Tyr-217, Asn-222, Glu-238, and Asp-298 each contribute to the S-adenosyl-L-methionine site. Cys-323 serves as the catalytic Nucleophile. Catalysis depends on Glu-357, which acts as the Proton acceptor.

Belongs to the class I-like SAM-binding methyltransferase superfamily. RNA M5U methyltransferase family. TrmA subfamily.

The catalysed reaction is uridine(54) in tRNA + S-adenosyl-L-methionine = 5-methyluridine(54) in tRNA + S-adenosyl-L-homocysteine + H(+). It catalyses the reaction uridine(341) in tmRNA + S-adenosyl-L-methionine = 5-methyluridine(341) in tmRNA + S-adenosyl-L-homocysteine + H(+). In terms of biological role, dual-specificity methyltransferase that catalyzes the formation of 5-methyluridine at position 54 (m5U54) in all tRNAs, and that of position 341 (m5U341) in tmRNA (transfer-mRNA). The chain is tRNA/tmRNA (uracil-C(5))-methyltransferase from Shewanella baltica (strain OS185).